We begin with the raw amino-acid sequence, 271 residues long: 1,4-dihydroxy-2-naphthoyl-CoA synthase (271 aa).

Substrate-binding positions include serine 71–glutamine 75, tyrosine 83, tyrosine 115–glycine 119, threonine 141, serine 147, tyrosine 244, and lysine 259. A hydrogencarbonate-binding site is contributed by glutamine 140 to glycine 142. Residues lysine 250–aspartate 263 are compositionally biased toward basic and acidic residues. The disordered stretch occupies residues lysine 250 to proline 271.

The protein belongs to the enoyl-CoA hydratase/isomerase family. MenB subfamily. Requires hydrogencarbonate as cofactor.

The enzyme catalyses 2-succinylbenzoyl-CoA + H(+) = 1,4-dihydroxy-2-naphthoyl-CoA + H2O. It functions in the pathway quinol/quinone metabolism; 1,4-dihydroxy-2-naphthoate biosynthesis; 1,4-dihydroxy-2-naphthoate from chorismate: step 6/7. The protein operates within quinol/quinone metabolism; menaquinone biosynthesis. Its function is as follows. Converts o-succinylbenzoyl-CoA (OSB-CoA) to 1,4-dihydroxy-2-naphthoyl-CoA (DHNA-CoA). The chain is 1,4-dihydroxy-2-naphthoyl-CoA synthase from Bacillus subtilis (strain 168).